We begin with the raw amino-acid sequence, 79 residues long: Cell division protein ZapB (79 aa).

Residues 4–78 (EVFEKLEAKV…LQALLGKMEE (75 aa)) are a coiled coil.

It belongs to the ZapB family. As to quaternary structure, homodimer. The ends of the coiled-coil dimer bind to each other, forming polymers. Interacts with FtsZ.

It localises to the cytoplasm. Its function is as follows. Non-essential, abundant cell division factor that is required for proper Z-ring formation. It is recruited early to the divisome by direct interaction with FtsZ, stimulating Z-ring assembly and thereby promoting cell division earlier in the cell cycle. Its recruitment to the Z-ring requires functional FtsA or ZipA. This chain is Cell division protein ZapB, found in Cronobacter sakazakii (strain ATCC BAA-894) (Enterobacter sakazakii).